The following is a 362-amino-acid chain: Methylthioribose-1-phosphate isomerase (362 aa).

D252 functions as the Proton donor in the catalytic mechanism.

The protein belongs to the eIF-2B alpha/beta/delta subunits family. MtnA subfamily.

The protein localises to the cytoplasm. It localises to the nucleus. It carries out the reaction 5-(methylsulfanyl)-alpha-D-ribose 1-phosphate = 5-(methylsulfanyl)-D-ribulose 1-phosphate. Its pathway is amino-acid biosynthesis; L-methionine biosynthesis via salvage pathway; L-methionine from S-methyl-5-thio-alpha-D-ribose 1-phosphate: step 1/6. In terms of biological role, catalyzes the interconversion of methylthioribose-1-phosphate (MTR-1-P) into methylthioribulose-1-phosphate (MTRu-1-P). The chain is Methylthioribose-1-phosphate isomerase from Drosophila persimilis (Fruit fly).